The chain runs to 403 residues: Glucose-signaling factor 2 (403 aa).

The Lumenal portion of the chain corresponds to 1–177 (MEIYIRLNAD…QEVQANYSSL (177 aa)). N-linked (GlcNAc...) asparagine glycosylation is found at N89 and N173. Residues 178 to 198 (VAQWLFFVMHIFKVGIITLFL) form a helical; Signal-anchor for type II membrane protein membrane-spanning segment. Residues 199 to 403 (KLGIANPISF…IKKNDLKKSN (205 aa)) lie on the Cytoplasmic side of the membrane. Residues 330-388 (ELENNLKKILEEYDGDIGKMNAEIRRFRRFGIYEPDEKLASLVKLRREIADEKEKASNN) adopt a coiled-coil conformation.

The protein localises to the endoplasmic reticulum membrane. May be involved in the secretion of hexose transporters from the endoplasmic reticulum. Involved in secretion of GAL2 and HXT1. This Saccharomyces cerevisiae (strain ATCC 204508 / S288c) (Baker's yeast) protein is Glucose-signaling factor 2 (GSF2).